Consider the following 145-residue polypeptide: MHPAHLLVLLAVCVSLLGASDIPPLPLNLLQFGFMIECAIRNRQPALDFMNYGCYCGTVGHGTPVDDLDRCCKTRNECYAEAEKHGCYPSLTTYRWQCGRVGLHCNSKTQCEVFVCACDLAAAKCLAQEDYNPAHFNINTKARCR.

The first 27 residues, 1–27, serve as a signal peptide directing secretion; sequence MHPAHLLVLLAVCVSLLGASDIPPLPL. Intrachain disulfides connect cysteine 38–cysteine 98, cysteine 54–cysteine 144, cysteine 56–cysteine 72, cysteine 71–cysteine 125, cysteine 78–cysteine 118, cysteine 87–cysteine 111, and cysteine 105–cysteine 116.

The protein belongs to the phospholipase A2 family. Group I subfamily. N49 sub-subfamily. Heterotrimer of alpha, beta, and gamma chains; non-covalently linked. In terms of tissue distribution, expressed by the venom gland.

It localises to the secreted. In terms of biological role, heterotrimer: Snake venom phospholipase A2 (PLA2) heterotrimer that acts as a potent presynaptic neurotoxin by blocking synaptic transmission and synaptic vesicle recycling. May act by binding in a calcium-dependent fashion to neurotonal pentraxin-1 (NPTX1) and neurotonal pentraxin-2 (NPTX2), but not to neuronal pentraxin receptor (NPTXR). Also binds to taipoxin-associated calcium binding protein 49 (RCN2), a protein localized in the lumen of endoplasmic reticulum. Its function is as follows. Monomer (beta chain): Snake venom phospholipase A2 homolog that is neither toxic nor enzymatically active. Does not bind calcium. The polypeptide is Neutral phospholipase A2 paradoxin-like beta chain (Oxyuranus microlepidotus (Inland taipan)).